The sequence spans 115 residues: Vespryn (115 aa).

A signal peptide spans 1–15; sequence MTWLLLCLLAQYENG. The B30.2/SPRY domain occupies 22–115; the sequence is SSSAKPYKTS…VKRKDHLRLT (94 aa).

The protein belongs to the ohanin/vespryn family. Expressed by the venom gland.

The protein resides in the secreted. In terms of biological role, neurotoxin that produces dose-dependent hypolocomotion and hyperalgesia in mice. May directly act on the central nervous system, as it is 6500-fold more potent when administered intracerebroventricularly than intraperitoneal. The protein is Vespryn of Pogona barbata (Bearded dragon).